Here is a 93-residue protein sequence, read N- to C-terminus: Cell division protein FtsB (93 aa).

Residues Met-1 to Leu-3 are Cytoplasmic-facing. A helical transmembrane segment spans residues Phe-4 to Phe-21. Topologically, residues Gly-22–Gln-93 are periplasmic. Residues Val-42 to Leu-75 are a coiled coil.

The protein belongs to the FtsB family. As to quaternary structure, part of a complex composed of FtsB, FtsL and FtsQ.

The protein resides in the cell inner membrane. Functionally, essential cell division protein. May link together the upstream cell division proteins, which are predominantly cytoplasmic, with the downstream cell division proteins, which are predominantly periplasmic. The polypeptide is Cell division protein FtsB (Vibrio vulnificus (strain YJ016)).